Here is a 209-residue protein sequence, read N- to C-terminus: Glycerol-3-phosphate acyltransferase (209 aa).

A run of 5 helical transmembrane segments spans residues 13–33 (ALIASLAIGYLLGSIPFGLLL), 63–83 (LAAATLLLDALKATAAALIAQ), 94–114 (PGLLGGFAAFIGHLFPVWLGF), 127–147 (LLGIFPLMVLVFAIVWLSIAF), and 151–171 (YSSLSALVATLVIPVALWILG).

This sequence belongs to the PlsY family. As to quaternary structure, probably interacts with PlsX.

The protein resides in the cell inner membrane. It carries out the reaction an acyl phosphate + sn-glycerol 3-phosphate = a 1-acyl-sn-glycero-3-phosphate + phosphate. Its pathway is lipid metabolism; phospholipid metabolism. In terms of biological role, catalyzes the transfer of an acyl group from acyl-phosphate (acyl-PO(4)) to glycerol-3-phosphate (G3P) to form lysophosphatidic acid (LPA). This enzyme utilizes acyl-phosphate as fatty acyl donor, but not acyl-CoA or acyl-ACP. In Allorhizobium ampelinum (strain ATCC BAA-846 / DSM 112012 / S4) (Agrobacterium vitis (strain S4)), this protein is Glycerol-3-phosphate acyltransferase.